The following is a 907-amino-acid chain: Sensor protein GacS (907 aa).

3 helical membrane passes run 9 to 25 (ASLM…WMQL), 84 to 101 (VLAH…IGSG), and 159 to 178 (LFAS…TLAV). Residues 182 to 234 (RTINGPMSQIKQAVSQLKDGNLETRLPPLGSRELDELASGINRMAATLQNAQE) form the HAMP domain. The 222-residue stretch at 281 to 502 (NMSHEIRTPL…EFWISLKLPK (222 aa)) folds into the Histidine kinase domain. Position 284 is a phosphohistidine; by autocatalysis (His284). The Response regulatory domain maps to 658–777 (RVLCVDDNPA…QLAQVVLKWT (120 aa)). Asp707 is modified (4-aspartylphosphate). Residues 814–907 (KADLAADMLA…RLEAEARVMA (94 aa)) form the HPt domain. Position 853 is a phosphohistidine (His853).

Post-translationally, activation requires a sequential transfer of a phosphate group from a His in the primary transmitter domain, to an Asp in the receiver domain and to a His in the secondary transmitter domain.

Its subcellular location is the cell inner membrane. The enzyme catalyses ATP + protein L-histidine = ADP + protein N-phospho-L-histidine.. Its function is as follows. Forms part of a two-component regulatory system GacA/GacS(LemA). May be involved in lesion formation, swarming and in the production of extracellular protease, syringomycin and N-acyl-L-homoserine lactone (acyl-HSL). Required for pathogenicity on bean. The sequence is that of Sensor protein GacS (gacS) from Pseudomonas syringae pv. syringae.